Here is a 101-residue protein sequence, read N- to C-terminus: Large ribosomal subunit protein bL27 (101 aa).

A propeptide spanning residues 1–9 is cleaved from the precursor; sequence MLLMNLQLF.

The protein belongs to the bacterial ribosomal protein bL27 family. Post-translationally, the N-terminus is cleaved by ribosomal processing cysteine protease Prp.

The sequence is that of Large ribosomal subunit protein bL27 from Clostridium tetani (strain Massachusetts / E88).